The following is an 862-amino-acid chain: MLFTVSCSKMSSIVDRDDSSIFDGLVEEDDKDKAKRVSRNKSEKKRRDQFNVLIKELGSMLPGNARKMDKSTVLQKSIDFLRKHKEITAQSDASEIRQDWKPTFLSNEEFTQLMLEALDGFFLAIMTDGSIIYVSETVTSLLEHLPSDLVDQSIFNFIPEGEHSEVYKILSTHLLESDSLTPEDLKSKNQLEFCCHMLRGTIDPKEPSTYEYVRFIGNFKSLNSVSTSTHNGFEGTIQRTHRPSYEDRVCFVATVRLATPQFIKEMCTVEEPNEEFTSRHSLEWKFLFLDHRAPPIIGYLPFEVLGTSGYDYYHVDDLESLAKCHEHLMQYGKGKSCYYRFLTKGQQWIWLQTHYYITYHQWNSRPEFIVCTHTVVSYAEVRAERRRELGVEESLPETAADKSQDSGSDNRINTVSLKEALERFDHSPTPSASSRSSRKSSHTAVSDPSSTPTKIPTDTSTPPRPHLPAHEKMTQRRSSFSSQSINSQSVGSSLTQPAMSQAANLPIPQGMSQFQLSAQLGAMQHLKDQLEQRTRMIEANIHRQQEELRKIQEQLQMVHGQGLQMFLQQSNPGLNLGSVQLSSGNSNIQQLTPINMQGQVVPVNQIQSGVNAGHVSTGQHMIQQQTLQSTSTQSQQSVMSGHSQPTSLPNQTPSTLTAPLYNTMVISQPAAGSMVPIPSSMPQNSTQSATVTTFTQDRQIRFSQGQQLVTKLVTAPVACGAVMVPSTMLMGQVVTAYPTFATQQQQAQALSVTQQQQQQQQQQQQQQQQQPQQAQQPQSQQSSQDQPHPSVQQPAQLTQPPQQFLQTSRLLHGNPSTQLILSAAFPLQQSTFPPSHHQQHQQQQLHRHRTDSLTDPSKVQPQ.

The Nuclear localization signal signature appears at 32–47 (DKAKRVSRNKSEKKRR). One can recognise a bHLH domain in the interval 34-84 (AKRVSRNKSEKKRRDQFNVLIKELGSMLPGNARKMDKSTVLQKSIDFLRKH). Serine 38 and serine 42 each carry phosphoserine. Lysine 67 is covalently cross-linked (Glycyl lysine isopeptide (Lys-Gly) (interchain with G-Cter in SUMO1)). PAS domains are found at residues 107–177 (NEEF…LLES) and 262–332 (FIKE…MQYG). Residues 336–379 (SCYYRFLTKGQQWIWLQTHYYITYHQWNSRPEFIVCTHTVVSYA) enclose the PAC domain. The segment at 371 to 861 (CTHTVVSYAE…SLTDPSKVQP (491 aa)) is interaction with NR3C1. Residues 388–497 (ELGVEESLPE…QSVGSSLTQP (110 aa)) are disordered. Residues 405-416 (DSGSDNRINTVS) are compositionally biased toward polar residues. The residue at position 408 (serine 408) is a Phosphoserine. Residue serine 427 is modified to Phosphoserine; by GSK3-beta. The residue at position 431 (serine 431) is a Phosphoserine. Over residues 447-461 (DPSSTPTKIPTDTST) the composition is skewed to polar residues. Positions 450-570 (STPTKIPTDT…QGLQMFLQQS (121 aa)) are interaction with SIRT1. Threonine 451 and threonine 461 each carry phosphothreonine; by CDK5. Residues 478-493 (SSFSSQSINSQSVGSS) are compositionally biased toward low complexity. The tract at residues 514–564 (FQLSAQLGAMQHLKDQLEQRTRMIEANIHRQQEELRKIQEQLQMVHGQGLQ) is implicated in the circadian rhythmicity. The segment covering 623–637 (QQQTLQSTSTQSQQS) has biased composition (low complexity). 3 disordered regions span residues 623 to 652 (QQQT…PNQT), 768 to 802 (QQQP…QPPQ), and 822 to 862 (SAAF…VQPQ). The span at 638 to 652 (VMSGHSQPTSLPNQT) shows a compositional bias: polar residues. Positions 853–862 (LTDPSKVQPQ) are enriched in polar residues. Residue lysine 858 forms a Glycyl lysine isopeptide (Lys-Gly) (interchain with G-Cter in SUMO1) linkage.

Component of the circadian clock oscillator which includes the CRY proteins, CLOCK or NPAS2, BMAL1 or BMAL2, CSNK1D and/or CSNK1E, TIMELESS and the PER proteins. Forms a heterodimer with BMAL1. The CLOCK-BMAL1 heterodimer is required for E-box-dependent transactivation, for CLOCK nuclear translocation and degradation, and for phosphorylation of both CLOCK and BMAL1. Interacts with NR3C1 in a ligand-dependent fashion. Interacts with ESR1 and estrogen stimulates this interaction. Interacts with the complex p35/CDK5. Interacts with RELA/p65. Interacts with KAT2B, CREBBP and EP300. Interacts with ID1 and ID3. Interacts with ID2. Interacts with MTA1. Interacts with OGA. Interacts with SIRT1. Interacts with CIPC. Interacts with EZH2. Interacts with EIF4E, PIWIL1 and DDX4. Interacts with PER1, PER2, CRY1 and CRY2 and this interaction requires a translocation to the nucleus. Interaction of the CLOCK-BMAL1 heterodimer with PER or CRY inhibits transcription activation. Interaction of the CLOCK-BMAL1 with CRY1 is independent of DNA but with PER2 is off DNA. The CLOCK-BMAL1 heterodimer interacts with GSK3B. Interacts with KDM5A. Interacts with KMT2A; in a circadian manner. Interacts with MYBBP1A. Interacts with THRAP3. Interacts with MED1; this interaction requires the presence of THRAP3. Interacts with NCOA2. The CLOCK-BMAL1 heterodimer interacts with PASD1. Interacts with ASS1 and IMPDH2; in a circadian manner. Interacts with NDUFA9. Interacts with PIWIL2 (via PIWI domain). Interacts with HNF4A. In terms of processing, ubiquitinated, leading to its proteasomal degradation. Post-translationally, O-glycosylated; contains O-GlcNAc. O-glycosylation by OGT prevents protein degradation by inhibiting ubiquitination. It also stabilizes the CLOCK-BMAL1 heterodimer thereby increasing CLOCK-BMAL1-mediated transcriptional activation of PER1/2/3 and CRY1/2. Phosphorylation is dependent on the CLOCK-BMAL1 heterodimer formation. Phosphorylation enhances the transcriptional activity, alters the subcellular localization and decreases the stability of the heterodimer by promoting its degradation. Phosphorylation shows circadian variations in the liver. May be phosphorylated by CSNK1D and CKSN1E. In terms of processing, sumoylation enhances its transcriptional activity and interaction with ESR1, resulting in up-regulation of ESR1 activity. Estrogen stimulates sumoylation. Desumoylation by SENP1 negatively regulates its transcriptional activity. Post-translationally, undergoes lysosome-mediated degradation in a time-dependent manner in the liver. Expressed in the suprachiasmatic nucleus (SCN), and in the piriform cortex (PC).

The protein resides in the cytoplasm. The protein localises to the nucleus. It localises to the cytosol. The catalysed reaction is L-lysyl-[protein] + acetyl-CoA = N(6)-acetyl-L-lysyl-[protein] + CoA + H(+). Transcriptional activator which forms a core component of the circadian clock. The circadian clock, an internal time-keeping system, regulates various physiological processes through the generation of approximately 24 hour circadian rhythms in gene expression, which are translated into rhythms in metabolism and behavior. It is derived from the Latin roots 'circa' (about) and 'diem' (day) and acts as an important regulator of a wide array of physiological functions including metabolism, sleep, body temperature, blood pressure, endocrine, immune, cardiovascular, and renal function. Consists of two major components: the central clock, residing in the suprachiasmatic nucleus (SCN) of the brain, and the peripheral clocks that are present in nearly every tissue and organ system. Both the central and peripheral clocks can be reset by environmental cues, also known as Zeitgebers (German for 'timegivers'). The predominant Zeitgeber for the central clock is light, which is sensed by retina and signals directly to the SCN. The central clock entrains the peripheral clocks through neuronal and hormonal signals, body temperature and feeding-related cues, aligning all clocks with the external light/dark cycle. Circadian rhythms allow an organism to achieve temporal homeostasis with its environment at the molecular level by regulating gene expression to create a peak of protein expression once every 24 hours to control when a particular physiological process is most active with respect to the solar day. Transcription and translation of core clock components (CLOCK, NPAS2, BMAL1, BMAL2, PER1, PER2, PER3, CRY1 and CRY2) plays a critical role in rhythm generation, whereas delays imposed by post-translational modifications (PTMs) are important for determining the period (tau) of the rhythms (tau refers to the period of a rhythm and is the length, in time, of one complete cycle). A diurnal rhythm is synchronized with the day/night cycle, while the ultradian and infradian rhythms have a period shorter and longer than 24 hours, respectively. Disruptions in the circadian rhythms contribute to the pathology of cardiovascular diseases, cancer, metabolic syndromes and aging. A transcription/translation feedback loop (TTFL) forms the core of the molecular circadian clock mechanism. Transcription factors, CLOCK or NPAS2 and BMAL1 or BMAL2, form the positive limb of the feedback loop, act in the form of a heterodimer and activate the transcription of core clock genes and clock-controlled genes (involved in key metabolic processes), harboring E-box elements (5'-CACGTG-3') within their promoters. The core clock genes: PER1/2/3 and CRY1/2 which are transcriptional repressors form the negative limb of the feedback loop and interact with the CLOCK|NPAS2-BMAL1|BMAL2 heterodimer inhibiting its activity and thereby negatively regulating their own expression. This heterodimer also activates nuclear receptors NR1D1/2 and RORA/B/G, which form a second feedback loop and which activate and repress BMAL1 transcription, respectively. Regulates the circadian expression of ICAM1, VCAM1, CCL2, THPO and MPL and also acts as an enhancer of the transactivation potential of NF-kappaB. Plays an important role in the homeostatic regulation of sleep. The CLOCK-BMAL1 heterodimer regulates the circadian expression of SERPINE1/PAI1, VWF, B3, CCRN4L/NOC, NAMPT, DBP, MYOD1, PPARGC1A, PPARGC1B, SIRT1, GYS2, F7, NGFR, GNRHR, BHLHE40/DEC1, ATF4, MTA1, KLF10 and also genes implicated in glucose and lipid metabolism. Promotes rhythmic chromatin opening, regulating the DNA accessibility of other transcription factors. The CLOCK-BMAL2 heterodimer activates the transcription of SERPINE1/PAI1 and BHLHE40/DEC1. The preferred binding motif for the CLOCK-BMAL1 heterodimer is 5'-CACGTGA-3', which contains a flanking adenine nucleotide at the 3-prime end of the canonical 6-nucleotide E-box sequence. CLOCK specifically binds to the half-site 5'-CAC-3', while BMAL1 binds to the half-site 5'-GTGA-3'. The CLOCK-BMAL1 heterodimer also recognizes the non-canonical E-box motifs 5'-AACGTGA-3' and 5'-CATGTGA-3'. CLOCK has an intrinsic acetyltransferase activity, which enables circadian chromatin remodeling by acetylating histones and nonhistone proteins, including its own partner BMAL1. Represses glucocorticoid receptor NR3C1/GR-induced transcriptional activity by reducing the association of NR3C1/GR to glucocorticoid response elements (GREs) via the acetylation of multiple lysine residues located in its hinge region. The acetyltransferase activity of CLOCK is as important as its transcription activity in circadian control. Acetylates metabolic enzymes IMPDH2 and NDUFA9 in a circadian manner. Facilitated by BMAL1, rhythmically interacts and acetylates argininosuccinate synthase 1 (ASS1) leading to enzymatic inhibition of ASS1 as well as the circadian oscillation of arginine biosynthesis and subsequent ureagenesis. Drives the circadian rhythm of blood pressure through transcriptional activation of ATP1B1. This Rattus norvegicus (Rat) protein is Circadian locomoter output cycles protein kaput (Clock).